The chain runs to 586 residues: Protein CBFA2T2 (586 aa).

The disordered stretch occupies residues 1–95 (MVGIPGPYQF…SSSSSLANQQ (95 aa)). A compositionally biased stretch (polar residues) spans 56-68 (SSHSNGINHSPPT). Over residues 77–90 (QRSSNGPSSSSSSS) the composition is skewed to low complexity. A TAFH domain is found at 102-197 (VRQLSKLKRF…TPSQYLAQHE (96 aa)). Disordered stretches follow at residues 204 to 242 (STSS…AEPP) and 387 to 417 (IRKG…FGSR). The segment covering 228–237 (DRREEERETA) has biased composition (basic and acidic residues). The segment covering 399–409 (SPSSTDSGASD) has biased composition (low complexity). Residues 429–481 (RKAEEAVNEVKRQAMSEVQKAVSEAEQKAFEMIASERARMEQTIVDAKRRAAE) are a coiled coil. Zn(2+)-binding residues include cysteine 497, cysteine 500, cysteine 508, cysteine 511, cysteine 517, cysteine 521, histidine 529, and cysteine 533. The MYND-type zinc finger occupies 497–533 (CWNCGRKASETCSGCNIARYCGSFCQHKDWEKHHRIC). The tract at residues 561–586 (SPTLERSSSATSRSSTPASVTAVDGL) is disordered. The segment covering 566–586 (RSSSATSRSSTPASVTAVDGL) has biased composition (low complexity).

Its subcellular location is the nucleus. Its function is as follows. May act as a transcriptional corepressor. The chain is Protein CBFA2T2 (cbfa2t2) from Xenopus laevis (African clawed frog).